The sequence spans 1277 residues: Clustered mitochondria protein 1 (1277 aa).

2 disordered regions span residues Leu-19–Lys-39 and Leu-148–Lys-176. Residues His-27 to Gln-36 are compositionally biased toward basic residues. Positions Ile-153–Lys-176 are enriched in basic and acidic residues. Residues Pro-339–Ala-596 form the Clu domain. TPR repeat units follow at residues Gly-704–Asp-738, Ala-1020–Val-1053, and Gly-1148–Gln-1181. The segment at Leu-1212–Lys-1277 is disordered. The span at Lys-1235 to Asp-1249 shows a compositional bias: basic and acidic residues. Ser-1247 is modified (phosphoserine). Basic residues predominate over residues Ser-1264–Lys-1277.

Belongs to the CLU family. As to quaternary structure, may associate with the eukaryotic translation initiation factor 3 (eIF-3) complex. Associates with the 80S ribosome.

It is found in the cytoplasm. In terms of biological role, mRNA-binding protein involved in proper cytoplasmic distribution of mitochondria. This Saccharomyces cerevisiae (strain ATCC 204508 / S288c) (Baker's yeast) protein is Clustered mitochondria protein 1.